A 512-amino-acid polypeptide reads, in one-letter code: Podocan-like protein 1 (512 aa).

The signal sequence occupies residues 1–26 (MAESGLAMWPSLLLLLLLPGPPPVAG). The region spanning 37 to 74 (ESLQPLPRACPLRCSCPRVDTVDCDGLDLRVFPDNITR) is the LRRNT domain. A glycan (N-linked (GlcNAc...) asparagine) is linked at N71. 17 LRR repeats span residues 75–96 (AAQHLSLQNNQLQELPYNELSR), 99–119 (GLRTLNLHNNLISSEGLPDEA), 125–146 (QLQHLCVAHNKLSVAPQFLPRS), 147–167 (LRVADLAANQVMEIFPLTFGE), 170–193 (ALRSVYLHNNQLSNAGLPPDAFRG), 196–216 (AIATLSLSNNQLSYLPPSLPP), 217–238 (SLERLHLQNNLISKVPRGALSR), 241–261 (QLRELYLQHNQLTDSGLDATT), 267–288 (SLEYLDLSHNQLTTVPAGLPRT), 289–309 (LAILHLGRNRIRQVEAARLHG), 312–332 (GLRYLLLQHNQLGSSGLPAGA), 338–359 (GLHTLHLYGNGLDRVPPALPRR), 360–380 (LRALVLPHNHVAALGARDLVA), 383–396 (GLTELNLAYNRLAS), 409–430 (ALRSLDLAGNQLTRLPMGLPTG), 431–451 (LRTLQLQRNQLRMLEPEPLAG), and 454–474 (QLRELSLAHNRLRVGDIGPGT).

This sequence belongs to the small leucine-rich proteoglycan (SLRP) family. SLRP class V subfamily. N-glycosylated.

It is found in the secreted. It localises to the extracellular space. Its subcellular location is the extracellular matrix. This is Podocan-like protein 1 (PODNL1) from Homo sapiens (Human).